Reading from the N-terminus, the 530-residue chain is MKRTPVLIDVNGVPLRESLSYNGGGAGFGGQMAEWLPPAQSADAALLPALRLGNARADDLVRNNGIAANAVALHKDHIVGHMFLISYRPNWRWLGMRETAAKSFVDEVEAAWSEYAEGMFGEIDVEGKRTFTEFIREGVGVHAFNGEIFVQPVWDTETTQLFRTRFKAVSPKRVDTPGHGMGNRFLRAGVEVDRYGRAVAYHICEDDFPFSGSGRWERIPRELPTGRPAMLHIFEPVEDGQTRGANQFYSVMERLKMLDSLQATQLQSAIVKAMYAATIESELDTEKAFEYIAGAPQEQKDNPLINILEKFSSWYDTNNVTLGGVKIPHLFPGDDLKLQTAQDSDNGFSALEQALLRYIAAGLGVSYEQLSRDYSKVSYSSARASANESWRYFMGRRKFIAARLATQMFSCWLEEALLRGIIRPPRARFDFYQARSAWSRAEWIGAGRMAIDGLKEVQESVMRIEAGLSTYEKGLALMGEDYQDIFRQQVRESAERQKAGLSRPVWIEQAYQQQIAESRRPEEETTPRET.

The protein belongs to the siphoviridae portal protein family. Homododecamer. Interacts with the terminase complex composed of two small and one large terminase subunits. In terms of processing, proteolytically cleaved by the viral protease during capsid maturation.

The protein resides in the virion. Its function is as follows. Forms the portal vertex of the capsid. This portal plays critical roles in head assembly, genome packaging, neck/tail attachment, and genome ejection. The portal protein multimerizes as a single ring-shaped homododecamer arranged around a central channel. Binds to the terminase subunits to form the packaging machine. This Enterobacteria phage P21 (Bacteriophage 21) protein is Portal protein B.